The primary structure comprises 194 residues: Oligoribonuclease (194 aa).

The Exonuclease domain maps to 11–174 (LIWIDLEMTG…SDVRDSIDEL (164 aa)). Y132 is an active-site residue.

It belongs to the oligoribonuclease family.

The protein resides in the cytoplasm. 3'-to-5' exoribonuclease specific for small oligoribonucleotides. This is Oligoribonuclease from Xanthomonas euvesicatoria pv. vesicatoria (strain 85-10) (Xanthomonas campestris pv. vesicatoria).